The sequence spans 162 residues: Phenazine biosynthesis protein PhzB 2 (162 aa).

A Phosphothreonine modification is found at T91.

This sequence belongs to the PhzA/PhzB family.

Functionally, involved in the biosynthesis of the antibiotic phenazine, a nitrogen-containing heterocyclic molecule having important roles in virulence, competition and biological control. The sequence is that of Phenazine biosynthesis protein PhzB 2 (phzB2) from Pseudomonas aeruginosa (strain UCBPP-PA14).